We begin with the raw amino-acid sequence, 368 residues long: tRNA(Met) cytidine acetate ligase (368 aa).

Residues 7-20 (IAEF…HKYL), glycine 96, asparagine 152, and arginine 175 contribute to the ATP site.

The protein belongs to the TmcAL family.

The protein localises to the cytoplasm. It catalyses the reaction cytidine(34) in elongator tRNA(Met) + acetate + ATP = N(4)-acetylcytidine(34) in elongator tRNA(Met) + AMP + diphosphate. In terms of biological role, catalyzes the formation of N(4)-acetylcytidine (ac(4)C) at the wobble position of elongator tRNA(Met), using acetate and ATP as substrates. First activates an acetate ion to form acetyladenylate (Ac-AMP) and then transfers the acetyl group to tRNA to form ac(4)C34. The chain is tRNA(Met) cytidine acetate ligase from Streptococcus pyogenes serotype M3 (strain SSI-1).